Reading from the N-terminus, the 469-residue chain is Glutamate--tRNA ligase 2 (469 aa).

The 'HIGH' region signature appears at 8-18 (PSPTGFLHVGG). Positions 250–254 (KLSKR) match the 'KMSKS' region motif. Lys-253 is an ATP binding site.

The protein belongs to the class-I aminoacyl-tRNA synthetase family. Glutamate--tRNA ligase type 1 subfamily. As to quaternary structure, monomer.

The protein localises to the cytoplasm. The catalysed reaction is tRNA(Glu) + L-glutamate + ATP = L-glutamyl-tRNA(Glu) + AMP + diphosphate. Its function is as follows. Catalyzes the attachment of glutamate to tRNA(Glu) in a two-step reaction: glutamate is first activated by ATP to form Glu-AMP and then transferred to the acceptor end of tRNA(Glu). In Thermotoga petrophila (strain ATCC BAA-488 / DSM 13995 / JCM 10881 / RKU-1), this protein is Glutamate--tRNA ligase 2.